The following is a 488-amino-acid chain: MSITKPETTVLKNYIGGQWVASSGTETLEVPNPATGEVLARVPISTKEDVDQAVQAAKKAFATWKDVPVPKRARIMFSFHHLLNQHHEELAELVVQENGKAYKEAYGEIQRGIECVEFAAGAPTLLMGESLSNIAEEIDSEMFRYPLGVVAGITPFNFPMMVPLWMFPLAIVCGNTFVLKPSERTPILANKLAELFTEAGAPPGVLNVVHGAHEVVNALIDHEDIRAISFVGSQPVAKYVYERTAAQGKRVQALSGAKNHHIVMPDADVETAVQHVISSAFGSAGQRCMACSAVVIVGENETFVRRLKQKADELIIGNGMDPEVLLTPVIRQSHREKVLGYIQKGIEEGAVLLRDGRKEMDDRPEGNFLGPTIFDYVTPDMTIAKEEIFAPVLSLLRANDLDEALSYIRKSRYGNGATIYTKDAKAVRKFREEADAGMLGINVGVPATMAFFPFSGWKDSFYGDLHVNGKDGVNFYTRKKMITSRFDF.

Phe-156, Lys-180, Glu-183, Arg-184, Ser-233, and Ser-255 together coordinate NAD(+). Cys-288 functions as the Nucleophile in the catalytic mechanism. Glu-387 contacts NAD(+).

It belongs to the aldehyde dehydrogenase family. IolA subfamily. As to quaternary structure, homotetramer.

The enzyme catalyses 3-oxopropanoate + NAD(+) + CoA + H2O = hydrogencarbonate + acetyl-CoA + NADH + H(+). The catalysed reaction is 2-methyl-3-oxopropanoate + NAD(+) + CoA + H2O = propanoyl-CoA + hydrogencarbonate + NADH + H(+). The protein operates within polyol metabolism; myo-inositol degradation into acetyl-CoA; acetyl-CoA from myo-inositol: step 7/7. Catalyzes the oxidation of malonate semialdehyde (MSA) and methylmalonate semialdehyde (MMSA) into acetyl-CoA and propanoyl-CoA, respectively. Is involved in a myo-inositol catabolic pathway. Bicarbonate, and not CO2, is the end-product of the enzymatic reaction. The chain is Malonate-semialdehyde dehydrogenase 1 from Geobacillus kaustophilus (strain HTA426).